Consider the following 390-residue polypeptide: Isotocin receptor (390 aa).

Topologically, residues 1–48 (MEEMFKEQDFWSFNESSRNSTVGNETFGGNQTVNPLKRNEEVAKVEVT) are extracellular. 4 N-linked (GlcNAc...) asparagine glycosylation sites follow: asparagine 14, asparagine 19, asparagine 24, and asparagine 30. A helical membrane pass occupies residues 49-69 (VLALVLFLALAGNLCVLIAIY). Residues 70 to 86 (TAKHTQSRMYYLMKHLS) are Cytoplasmic-facing. The chain crosses the membrane as a helical span at residues 87–107 (IADLVVAVFQVLPQLIWDITF). Residues 108-124 (RFYGPDFLCRLVKYLQT) lie on the Extracellular side of the membrane. A disulfide bond links cysteine 116 and cysteine 191. A helical membrane pass occupies residues 125–145 (VGMFASTYMLVLMSIDRCIAI). At 146–160 (CQPLRSLHKRKDRCY) the chain is on the cytoplasmic side. Residues 161 to 181 (VIVSWALSLVFSVPQVYIFSL) traverse the membrane as a helical segment. The Extracellular segment spans residues 182-206 (REIGNGVYDCWGDFVQPWGAKAYIT). A helical membrane pass occupies residues 207–227 (WISLTIYIIPVAILGGCYGLI). Residues 228–276 (SFKIWQNFKRKTKKDQCITLTTAASKANALARVSSVKLVSKAKITTVKM) lie on the Cytoplasmic side of the membrane. The helical transmembrane segment at 277-297 (TFVIVLAYIVCWTPFFFVQMW) threads the bilayer. Topologically, residues 298–311 (SAWDPEAPREAMPF) are extracellular. A helical membrane pass occupies residues 312–332 (IISMLLASLNSCCNPWIYMFF). The Cytoplasmic segment spans residues 333 to 390 (AGHLFHDLKQSLLCCSTLYLKSSQCRCDQEHDSRKSNCSTYVIKSTSSQRSITQSSIT).

It belongs to the G-protein coupled receptor 1 family. Vasopressin/oxytocin receptor subfamily. Expressed in brain, intestine, bladder, skeletal muscle, lateral line, gills and kidney.

The protein localises to the cell membrane. In terms of biological role, binds to isotocin. Can also be activated by vasotocin, mesotocin, oxytocin and Arg-vasopressin, although these have lower potencies than isotocin. Produces an induction of membrane chloride currents indicating that it is coupled to the inositol phosphate/calcium pathway. The polypeptide is Isotocin receptor (Catostomus commersonii (White sucker)).